The following is a 71-amino-acid chain: Protein SlyX homolog (71 aa).

Belongs to the SlyX family.

In Stutzerimonas stutzeri (strain A1501) (Pseudomonas stutzeri), this protein is Protein SlyX homolog.